We begin with the raw amino-acid sequence, 958 residues long: Glycine dehydrogenase (decarboxylating) (958 aa).

Position 705 is an N6-(pyridoxal phosphate)lysine (K705).

This sequence belongs to the GcvP family. As to quaternary structure, the glycine cleavage system is composed of four proteins: P, T, L and H. It depends on pyridoxal 5'-phosphate as a cofactor.

The enzyme catalyses N(6)-[(R)-lipoyl]-L-lysyl-[glycine-cleavage complex H protein] + glycine + H(+) = N(6)-[(R)-S(8)-aminomethyldihydrolipoyl]-L-lysyl-[glycine-cleavage complex H protein] + CO2. Functionally, the glycine cleavage system catalyzes the degradation of glycine. The P protein binds the alpha-amino group of glycine through its pyridoxal phosphate cofactor; CO(2) is released and the remaining methylamine moiety is then transferred to the lipoamide cofactor of the H protein. The chain is Glycine dehydrogenase (decarboxylating) from Synechococcus sp. (strain CC9902).